The primary structure comprises 195 residues: Pyruvoyl-dependent arginine decarboxylase AaxB (195 aa).

Ser53 is subject to Pyruvic acid (Ser).

Belongs to the pyruvoyl-dependent arginine decarboxylase family. Trimer of an alpha-beta dimer. The cofactor is pyruvate.

It is found in the cytoplasm. The catalysed reaction is L-arginine + H(+) = agmatine + CO2. With respect to regulation, inhibited by argininamide. Part of the AaxABC system, catalyzes the decarboxylation of L-arginine. The arginine uptake by the bacterium in the macrophage may be a virulence factor against the host innate immune response. In Chlamydia pneumoniae (Chlamydophila pneumoniae), this protein is Pyruvoyl-dependent arginine decarboxylase AaxB (aaxB).